The chain runs to 199 residues: NAD(P)H dehydrogenase (quinone) (199 aa).

Positions 4–190 (ILVLYYSMYG…AIARFQGEHV (187 aa)) constitute a Flavodoxin-like domain. Residues 10–15 (SMYGHI) and 79–81 (TRF) each bind FMN. Position 12 (Y12) interacts with NAD(+). W99 serves as a coordination point for substrate. FMN is bound by residues 114 to 119 (STGTGG) and H134.

It belongs to the WrbA family. Requires FMN as cofactor.

The catalysed reaction is a quinone + NADH + H(+) = a quinol + NAD(+). It catalyses the reaction a quinone + NADPH + H(+) = a quinol + NADP(+). This is NAD(P)H dehydrogenase (quinone) from Yersinia enterocolitica serotype O:8 / biotype 1B (strain NCTC 13174 / 8081).